The chain runs to 281 residues: L-cysteine S-thiosulfotransferase subunit SoxA (281 aa).

Positions 1–25 (MTKHGFLLATLVLAGATLPIGPVTA) are cleaved as a signal peptide. A disulfide bridge connects residues Cys-99 and Cys-130. In terms of domain architecture, Cytochrome c spans 175–281 (AAYEQGKRFY…LELNGPGARK (107 aa)). Heme contacts are provided by Cys-195 and His-199. A substrate-binding site is contributed by Arg-238. Cys-242 contacts heme. The Cysteine persulfide intermediate role is filled by Cys-242.

The protein belongs to the SoxA family. As to quaternary structure, heterodimer of SoxA and SoxX. Requires heme as cofactor. In terms of processing, cysteine persulfide at Cys-242.

The protein resides in the periplasm. It carries out the reaction L-cysteinyl-[SoxY protein] + thiosulfate + 2 Fe(III)-[cytochrome c] = S-sulfosulfanyl-L-cysteinyl-[SoxY protein] + 2 Fe(II)-[cytochrome c] + 2 H(+). The enzyme catalyses S-sulfanyl-L-cysteinyl-[SoxY protein] + thiosulfate + 2 Fe(III)-[cytochrome c] = S-(2-sulfodisulfanyl)-L-cysteinyl-[SoxY protein] + 2 Fe(II)-[cytochrome c] + 2 H(+). In terms of biological role, C-type monoheme cytochrome, which is part of the SoxAX cytochrome complex involved in sulfur oxidation. The SoxAX complex catalyzes the formation of a heterodisulfide bond between the conserved cysteine residue on a sulfur carrier SoxYZ complex subunit SoxY and thiosulfate or other inorganic sulfur substrates. This leads to the intermediary formation of conspicuous sulfur globules inside of the cells. The sequence is that of L-cysteine S-thiosulfotransferase subunit SoxA from Allochromatium vinosum (Chromatium vinosum).